A 366-amino-acid chain; its full sequence is Spermidine/putrescine import ATP-binding protein PotA (366 aa).

An ABC transporter domain is found at 8–239 (IRFENVTKQF…PINKFVADFI (232 aa)). 41 to 48 (GPSGCGKT) serves as a coordination point for ATP.

This sequence belongs to the ABC transporter superfamily. Spermidine/putrescine importer (TC 3.A.1.11.1) family. The complex is composed of two ATP-binding proteins (PotA), two transmembrane proteins (PotB and PotC) and a solute-binding protein (PotD).

It localises to the cell membrane. The enzyme catalyses ATP + H2O + polyamine-[polyamine-binding protein]Side 1 = ADP + phosphate + polyamineSide 2 + [polyamine-binding protein]Side 1.. Part of the ABC transporter complex PotABCD involved in spermidine/putrescine import. Responsible for energy coupling to the transport system. The protein is Spermidine/putrescine import ATP-binding protein PotA of Listeria innocua serovar 6a (strain ATCC BAA-680 / CLIP 11262).